A 216-amino-acid polypeptide reads, in one-letter code: Putative F-box protein At2g03610 (216 aa).

An F-box domain is found at 19–69 (NQDWSKLCPDLLRPILESLSSIDFHRAKTVCSDWYSVWKTCKGYDSKWNQN).

The polypeptide is Putative F-box protein At2g03610 (Arabidopsis thaliana (Mouse-ear cress)).